Consider the following 243-residue polypeptide: UDP-2,3-diacylglucosamine hydrolase (243 aa).

Mn(2+)-binding residues include Asp-9, His-11, Asp-42, Asn-79, and His-114. Substrate is bound at residue 79–80 (NR). Residues Asp-122, Ser-160, Asn-164, and His-195 each contribute to the substrate site. Residues His-195 and His-197 each coordinate Mn(2+).

The protein belongs to the LpxH family. Requires Mn(2+) as cofactor.

The protein resides in the cell inner membrane. The enzyme catalyses UDP-2-N,3-O-bis[(3R)-3-hydroxytetradecanoyl]-alpha-D-glucosamine + H2O = 2-N,3-O-bis[(3R)-3-hydroxytetradecanoyl]-alpha-D-glucosaminyl 1-phosphate + UMP + 2 H(+). It functions in the pathway glycolipid biosynthesis; lipid IV(A) biosynthesis; lipid IV(A) from (3R)-3-hydroxytetradecanoyl-[acyl-carrier-protein] and UDP-N-acetyl-alpha-D-glucosamine: step 4/6. Functionally, hydrolyzes the pyrophosphate bond of UDP-2,3-diacylglucosamine to yield 2,3-diacylglucosamine 1-phosphate (lipid X) and UMP by catalyzing the attack of water at the alpha-P atom. Involved in the biosynthesis of lipid A, a phosphorylated glycolipid that anchors the lipopolysaccharide to the outer membrane of the cell. In Coxiella burnetii (strain Dugway 5J108-111), this protein is UDP-2,3-diacylglucosamine hydrolase.